The primary structure comprises 334 residues: Glyceraldehyde-3-phosphate dehydrogenase (334 aa).

NAD(+) contacts are provided by residues 12–13 (RI), Asp34, and Arg79. D-glyceraldehyde 3-phosphate is bound by residues 150-152 (SCT), Thr181, 210-211 (TG), and Arg233. Cys151 functions as the Nucleophile in the catalytic mechanism. Asn315 is a binding site for NAD(+).

This sequence belongs to the glyceraldehyde-3-phosphate dehydrogenase family. In terms of assembly, homotetramer.

The protein resides in the cytoplasm. The catalysed reaction is D-glyceraldehyde 3-phosphate + phosphate + NAD(+) = (2R)-3-phospho-glyceroyl phosphate + NADH + H(+). It functions in the pathway carbohydrate degradation; glycolysis; pyruvate from D-glyceraldehyde 3-phosphate: step 1/5. This is Glyceraldehyde-3-phosphate dehydrogenase (GPD) from Wickerhamomyces ciferrii (strain ATCC 14091 / BCRC 22168 / CBS 111 / JCM 3599 / NBRC 0793 / NRRL Y-1031 F-60-10) (Yeast).